The following is a 141-amino-acid chain: Globin, extracellular monomeric (141 aa).

A Globin domain is found at 1–141; sequence ECDALQRFKV…LGVITGAIHD (141 aa). C2 and C131 are joined by a disulfide. A heme b-binding site is contributed by H94.

The protein belongs to the globin family. As to quaternary structure, the giant hemoglobins of worms are formed of a monomeric subunit and a disulfide-bonded trimer. This subunit is monomeric.

Its subcellular location is the secreted. The sequence is that of Globin, extracellular monomeric from Tubifex tubifex (Sludge worm).